The primary structure comprises 168 residues: Crossover junction endodeoxyribonuclease RuvC (168 aa).

Residues D10, E70, and D143 contribute to the active site. The Mg(2+) site is built by D10, E70, and D143.

The protein belongs to the RuvC family. As to quaternary structure, homodimer which binds Holliday junction (HJ) DNA. The HJ becomes 2-fold symmetrical on binding to RuvC with unstacked arms; it has a different conformation from HJ DNA in complex with RuvA. In the full resolvosome a probable DNA-RuvA(4)-RuvB(12)-RuvC(2) complex forms which resolves the HJ. Requires Mg(2+) as cofactor.

It is found in the cytoplasm. It catalyses the reaction Endonucleolytic cleavage at a junction such as a reciprocal single-stranded crossover between two homologous DNA duplexes (Holliday junction).. Its function is as follows. The RuvA-RuvB-RuvC complex processes Holliday junction (HJ) DNA during genetic recombination and DNA repair. Endonuclease that resolves HJ intermediates. Cleaves cruciform DNA by making single-stranded nicks across the HJ at symmetrical positions within the homologous arms, yielding a 5'-phosphate and a 3'-hydroxyl group; requires a central core of homology in the junction. The consensus cleavage sequence is 5'-(A/T)TT(C/G)-3'. Cleavage occurs on the 3'-side of the TT dinucleotide at the point of strand exchange. HJ branch migration catalyzed by RuvA-RuvB allows RuvC to scan DNA until it finds its consensus sequence, where it cleaves and resolves the cruciform DNA. This is Crossover junction endodeoxyribonuclease RuvC from Roseiflexus sp. (strain RS-1).